The sequence spans 403 residues: Heparan-sulfate 6-O-sulfotransferase 2 (403 aa).

The Cytoplasmic segment spans residues 1–7 (MEDRSHK). A helical; Signal-anchor for type II membrane protein transmembrane segment spans residues 8–28 (VLLALVMLFLFAVIVLQYVCP). The Lumenal segment spans residues 29-403 (GTECQLLRLR…DYLGNVERWR (375 aa)). Residue N64 is glycosylated (N-linked (GlcNAc...) asparagine). Residue 88 to 96 (HIQKTGGTT) coordinates 3'-phosphoadenylyl sulfate. Residues 118 to 119 (KK), R135, W140, and H145 contribute to the substrate site. The Proton acceptor role is filled by H145. Residues R180 and S188 each coordinate 3'-phosphoadenylyl sulfate. H192 and W199 together coordinate substrate. An N-linked (GlcNAc...) asparagine glycan is attached at N259. 312–314 (TQY) contributes to the 3'-phosphoadenylyl sulfate binding site. N-linked (GlcNAc...) asparagine glycosylation occurs at N315. 318-319 (RA) is a 3'-phosphoadenylyl sulfate binding site. The disordered stretch occupies residues 381–403 (AHLREQGENSSSTDYLGNVERWR). An N-linked (GlcNAc...) asparagine glycan is attached at N389.

The protein belongs to the sulfotransferase 6 family.

The protein resides in the membrane. It catalyses the reaction alpha-D-glucosaminyl-[heparan sulfate](n) + 3'-phosphoadenylyl sulfate = 6-sulfo-alpha-D-glucosaminyl-[heparan sulfate](n) + adenosine 3',5'-bisphosphate + H(+). Its function is as follows. 6-O-sulfation enzyme which catalyzes the transfer of sulfate from 3'-phosphoadenosine 5'-phosphosulfate (PAPS) to position 6 of the N-sulfoglucosamine residue (GlcNS) of heparan sulfate. May also play a role in limb development. This is Heparan-sulfate 6-O-sulfotransferase 2 (HS6ST2) from Gallus gallus (Chicken).